Here is a 2715-residue protein sequence, read N- to C-terminus: Teneurin-3 (2715 aa).

Disordered stretches follow at residues 1 to 38 (MDVK…VPTQ) and 142 to 223 (GRSS…AALP). In terms of domain architecture, Teneurin N-terminal spans 1–309 (MDVKERRPYC…KSSKYCSWRC (309 aa)). Topologically, residues 1–310 (MDVKERRPYC…SSKYCSWRCT (310 aa)) are cytoplasmic. The segment covering 142–153 (GRSSCLSSRSNS) has biased composition (low complexity). Positions 159–168 (DTEHENRSDS) are enriched in basic and acidic residues. Residues 171-182 (EQPSNNPGQPTL) are compositionally biased toward polar residues. Over residues 201–213 (TSLNRNSLTNRRN) the composition is skewed to low complexity. The helical transmembrane segment at 311-331 (ALCAVGVSVLLAILLSYFIAM) threads the bilayer. The Extracellular segment spans residues 332-2715 (HLFGLNWHLQ…FLRQSEIGKR (2384 aa)). N-linked (GlcNAc...) asparagine glycosylation is found at N345, N380, and N419. EGF-like domains follow at residues 514–545 (SVVE…PDCS), 546–576 (RAAC…TECD), 578–610 (PTTQ…ENCE), 611–642 (EADC…SNCE), 644–677 (LKTM…PDCS), 678–709 (NEIC…ACNQ), 710–739 (RACH…EHCT), and 740–783 (IAHY…AGCD). 22 disulfide bridges follow: C518-C528, C522-C533, C535-C544, C553-C564, C566-C575, C582-C593, C587-C598, C600-C609, C614-C625, C619-C630, C632-C641, C652-C665, C667-C676, C681-C691, C685-C696, C698-C707, C712-C722, C716-C727, C729-C738, C752-C762, C756-C771, and C773-C782. Residue N670 is glycosylated (N-linked (GlcNAc...) asparagine). 2 N-linked (GlcNAc...) asparagine glycosylation sites follow: N869 and N892. The NHL 1 repeat unit spans residues 1181 to 1209 (LLAPVALACGIDGSLYVGDFNYVRRIFPS). Residue N1211 is glycosylated (N-linked (GlcNAc...) asparagine). NHL repeat units follow at residues 1216–1260 (LELR…PKSL), 1286–1330 (ARCG…NGII), 1347–1387 (CDTS…ITEN), 1418–1445 (LESA…INRI), and 1474–1517 (CYQS…VSKN). The stretch at 1527–1546 (YEVASPTDQELYIFDINGTH) is one YD 1 repeat. Residues N1543 and N1560 are each glycosylated (N-linked (GlcNAc...) asparagine). YD repeat units follow at residues 1563-1583 (YSND…LRIR), 1626-1645 (YHGN…WTTF), and 1646-1668 (FDYD…TNLH). Residues N1656, N1693, N1751, and N1836 are each glycosylated (N-linked (GlcNAc...) asparagine). YD repeat units lie at residues 1839-1858 (YSST…EKVD), 1880-1898 (YLEK…YIFE), 1899-1919 (YDMW…HTMQ), 1926-1943 (YYRN…IITD), 1944-1965 (YNEE…VLFK), 1966-1983 (YRRQ…TRVS), 1986-2006 (YDET…FICT), 2009-2029 (YRQI…DGMV), 2037-2056 (YDNS…TPLP), 2062-2079 (FDDI…GVIY), 2080-2106 (YDIN…IKEI), 2108-2121 (YEIF…ITIQ), 2122-2145 (YDNM…TKYA), 2148-2168 (YDVD…WRYN), 2169-2189 (YDLN…LTPL), 2191-2211 (YDLR…DEDG), 2223-2243 (YSSK…TVIY), and 2245-2265 (YDGL…LQFF). The N-linked (GlcNAc...) asparagine glycan is linked to N1937. N2140 carries an N-linked (GlcNAc...) asparagine glycan. N2280 carries N-linked (GlcNAc...) asparagine glycosylation. One copy of the YD 23 repeat lies at 2291–2332 (YDLQGHLFAMEISSGDEFYIASDNTGTPLAVFSSNGLMLKQT). A glycan (N-linked (GlcNAc...) asparagine) is linked at N2592.

This sequence belongs to the tenascin family. Teneurin subfamily. In terms of assembly, homodimer; disulfide-linked; to mediate homophilic cell adhesion. Most isoforms (isoform-type A and type-B) can mediate homophilic interaction. Heterodimer with either TENM1 or TENM2. May also form heterodimer with TENM4. Isoform A0B0: Does not form homodimer to mediate homophilic cell adhesion. Isoform A0B0: Heterodimer with ADGRL3. In terms of tissue distribution, in brain, expressed in highly specific regions of the postnatal brain: expressed in restricted domains of the developing hippocampal region, including proximal CA1, distal subiculum, and medial entorhinal cortex (at protein level). Expression matches with topographic connectivity between entorhinal cortex, CA1, and subiculum (at protein level). Also specifically expressed in subregions of the presubiculum, parasubiculum, medial mammillary nucleus and anteroventral thalamic nucleus that are topographically connected with subiculum or entorhinal cortex (at protein level). Expressed in neurons of the developing visual pathway (at protein level). Expressed in the dorsal and ventral lateral geniculate nucleus (dLGN and vLGN) and optic tract at birth. Expressed in ipsilateral retinal axons of terminal zones (TZs) in the developing superior colliculus (SC) throughout the first postnatal week. Expressed in the layer V of the visual caudal cortex. Expressed in the femoral and mandibular condylar cartilages. Strongly expressed in fibrous and proliferating chondrocytes. Poorly expressed in mature chondrocytes. Not expressed in hypertrophic chondrocytes.

Its subcellular location is the cell membrane. The protein resides in the cell projection. It is found in the axon. Involved in neural development by regulating the establishment of proper connectivity within the nervous system. Acts in both pre- and postsynaptic neurons in the hippocampus to control the assembly of a precise topographic projection: required in both CA1 and subicular neurons for the precise targeting of proximal CA1 axons to distal subiculum, probably by promoting homophilic cell adhesion. Promotes homophilic adhesion in a splicing isoform-dependent manner: most isoforms (isoform-type A and type-B) can mediate homophilic interaction. Promotes axon guidance. Required for proper dendrite morphogenesis and axon targeting in the vertebrate visual system, thereby playing a key role in the development of the visual pathway. Regulates the formation in ipsilateral retinal mapping to both the dorsal lateral geniculate nucleus (dLGN) and the superior colliculus (SC). May also be involved in the differentiation of the fibroblast-like cells in the superficial layer of mandibular condylar cartilage into chondrocytes. This chain is Teneurin-3, found in Mus musculus (Mouse).